Here is a 61-residue protein sequence, read N- to C-terminus: Small ribosomal subunit protein uS14 (61 aa).

Zn(2+) is bound by residues Cys24, Cys27, Cys40, and Cys43.

The protein belongs to the universal ribosomal protein uS14 family. Zinc-binding uS14 subfamily. In terms of assembly, part of the 30S ribosomal subunit. Contacts proteins S3 and S10. The cofactor is Zn(2+).

In terms of biological role, binds 16S rRNA, required for the assembly of 30S particles and may also be responsible for determining the conformation of the 16S rRNA at the A site. In Ruminiclostridium cellulolyticum (strain ATCC 35319 / DSM 5812 / JCM 6584 / H10) (Clostridium cellulolyticum), this protein is Small ribosomal subunit protein uS14.